Consider the following 469-residue polypeptide: Glutamate--tRNA ligase (469 aa).

Positions 11–21 (PSPTGFIHLGN) match the 'HIGH' region motif. Residues 114–131 (QREAGEKPRYDGTWRPEP) are compositionally biased toward basic and acidic residues. Positions 114-139 (QREAGEKPRYDGTWRPEPGKVLPEPP) are disordered. Positions 243–247 (KMSKR) match the 'KMSKS' region motif. Lys-246 lines the ATP pocket.

Belongs to the class-I aminoacyl-tRNA synthetase family. Glutamate--tRNA ligase type 1 subfamily. Monomer.

The protein localises to the cytoplasm. The catalysed reaction is tRNA(Glu) + L-glutamate + ATP = L-glutamyl-tRNA(Glu) + AMP + diphosphate. In terms of biological role, catalyzes the attachment of glutamate to tRNA(Glu) in a two-step reaction: glutamate is first activated by ATP to form Glu-AMP and then transferred to the acceptor end of tRNA(Glu). This Paraburkholderia xenovorans (strain LB400) protein is Glutamate--tRNA ligase.